Reading from the N-terminus, the 318-residue chain is NADH-ubiquinone oxidoreductase chain 1 (318 aa).

A run of 8 helical transmembrane segments spans residues 2-22, 69-89, 100-120, 146-166, 171-191, 223-243, 253-273, and 294-314; these read FMIN…FLTL, LMFI…WIPL, LGVL…LWSG, LAII…AMLI, YMWL…STLA, FFLA…ILFF, ELYT…FLWI, and LPLT…TASI.

The protein belongs to the complex I subunit 1 family. In terms of assembly, core subunit of respiratory chain NADH dehydrogenase (Complex I) which is composed of 45 different subunits.

Its subcellular location is the mitochondrion inner membrane. It carries out the reaction a ubiquinone + NADH + 5 H(+)(in) = a ubiquinol + NAD(+) + 4 H(+)(out). In terms of biological role, core subunit of the mitochondrial membrane respiratory chain NADH dehydrogenase (Complex I) which catalyzes electron transfer from NADH through the respiratory chain, using ubiquinone as an electron acceptor. Essential for the catalytic activity and assembly of complex I. The protein is NADH-ubiquinone oxidoreductase chain 1 (MT-ND1) of Felis catus (Cat).